We begin with the raw amino-acid sequence, 375 residues long: Squamosa promoter-binding-like protein 9 (375 aa).

Disordered regions lie at residues 1 to 30 and 43 to 73; these read MEMG…SFSG and GGGG…QIPR. The span at 18 to 30 shows a compositional bias: low complexity; that stretch reads SGGSSTESSSFSG. Residues 71–148 form an SBP-type zinc finger; sequence IPRCQVEGCG…AGHNERRRKP (78 aa). Cys74, Cys79, Cys96, His99, Cys115, Cys118, His122, and Cys134 together coordinate Zn(2+). Residues 131–147 carry the Bipartite nuclear localization signal motif; sequence KRSCRRRLAGHNERRRK. 2 disordered regions span residues 252–278 and 345–375; these read LLSN…NTWR and SDHH…NWSL. Residues 262-275 show a composition bias toward low complexity; it reads NNNNNNNNNNNNNN. Over residues 345 to 362 the composition is skewed to basic and acidic residues; sequence SDHHHQSRRQYMEDENTR. Positions 363–375 are enriched in polar residues; it reads AYDSSSHHTNWSL.

It depends on Zn(2+) as a cofactor.

It localises to the nucleus. The protein localises to the cytoplasm. Its function is as follows. Trans-acting factor that binds specifically to the consensus nucleotide sequence 5'-TNCGTACAA-3'. This is Squamosa promoter-binding-like protein 9 (SPL9) from Arabidopsis thaliana (Mouse-ear cress).